A 317-amino-acid polypeptide reads, in one-letter code: uncharacterized protein (317 aa).

One can recognise an HTH lysR-type domain in the interval 29–86 (IDLNLLTIFEAVYVHKGIVNAAKVLNLTPSAISQSIQKLRVIFPDPLFIRKGQGVTPT). The H-T-H motif DNA-binding region spans 46-65 (IVNAAKVLNLTPSAISQSIQ).

It belongs to the LysR transcriptional regulatory family.

This is an uncharacterized protein from Escherichia coli (strain K12).